The sequence spans 684 residues: Beta-mannosyltransferase 1 (684 aa).

Residues 1 to 28 are Cytoplasmic-facing; it reads MDKFIQSFSHQYLDSSSSLKLTARRKRK. Residues 29–49 traverse the membrane as a helical segment; the sequence is LTILGLFLFSLISLMIIISYS. The Extracellular portion of the chain corresponds to 50–684; it reads NNNILPGLSG…KFCKIYGETF (635 aa). N-linked (GlcNAc...) asparagine glycosylation is present at asparagine 297.

Belongs to the BMT family.

It localises to the membrane. In terms of biological role, beta-mannosyltransferase involved in cell wall biosynthesis. Required for addition of the first beta-mannose residue to acid-stable fraction of cell wall phosphopeptidomannan. Plays a key role in reducing host inflammatory response. This chain is Beta-mannosyltransferase 1 (BMT1), found in Candida albicans (strain SC5314 / ATCC MYA-2876) (Yeast).